We begin with the raw amino-acid sequence, 352 residues long: Glucose 1-dehydrogenase 1 (352 aa).

Cys-35 is a binding site for Zn(2+). Thr-37 is a substrate binding site. Zn(2+)-binding residues include His-60 and Glu-61. Asn-83 is a binding site for substrate. 4 residues coordinate Zn(2+): Cys-87, Cys-90, Cys-93, and Cys-101. Positions 108, 144, and 148 each coordinate substrate. A Zn(2+)-binding site is contributed by Gln-144. NADP(+) contacts are provided by residues 182-185, 204-206, 264-266, 292-294, and Lys-341; these read TGTI, NKR, FGF, and LIN. Asn-294 provides a ligand contact to substrate.

This sequence belongs to the zinc-containing alcohol dehydrogenase family. Glucose 1-dehydrogenase subfamily. The cofactor is Zn(2+).

It carries out the reaction D-glucose + NAD(+) = D-glucono-1,5-lactone + NADH + H(+). The catalysed reaction is D-glucose + NADP(+) = D-glucono-1,5-lactone + NADPH + H(+). In terms of biological role, catalyzes the NAD(P)(+)-dependent oxidation of D-glucose to D-gluconate via gluconolactone. Can utilize both NAD(+) and NADP(+) as electron acceptor. Is involved in the degradation of glucose through a non-phosphorylative variant of the Entner-Doudoroff pathway. The sequence is that of Glucose 1-dehydrogenase 1 from Picrophilus torridus (strain ATCC 700027 / DSM 9790 / JCM 10055 / NBRC 100828 / KAW 2/3).